We begin with the raw amino-acid sequence, 349 residues long: Small ribosomal subunit protein uS2 (349 aa).

It belongs to the universal ribosomal protein uS2 family.

This Methylobacterium nodulans (strain LMG 21967 / CNCM I-2342 / ORS 2060) protein is Small ribosomal subunit protein uS2.